The primary structure comprises 245 residues: 1-(5-phosphoribosyl)-5-[(5-phosphoribosylamino)methylideneamino] imidazole-4-carboxamide isomerase (245 aa).

The Proton acceptor role is filled by aspartate 8. Residue aspartate 129 is the Proton donor of the active site.

It belongs to the HisA/HisF family.

The protein localises to the cytoplasm. It catalyses the reaction 1-(5-phospho-beta-D-ribosyl)-5-[(5-phospho-beta-D-ribosylamino)methylideneamino]imidazole-4-carboxamide = 5-[(5-phospho-1-deoxy-D-ribulos-1-ylimino)methylamino]-1-(5-phospho-beta-D-ribosyl)imidazole-4-carboxamide. Its pathway is amino-acid biosynthesis; L-histidine biosynthesis; L-histidine from 5-phospho-alpha-D-ribose 1-diphosphate: step 4/9. This is 1-(5-phosphoribosyl)-5-[(5-phosphoribosylamino)methylideneamino] imidazole-4-carboxamide isomerase from Rhodopseudomonas palustris (strain ATCC BAA-98 / CGA009).